Consider the following 243-residue polypeptide: Segregation and condensation protein A (243 aa).

It belongs to the ScpA family. Component of a cohesin-like complex composed of ScpA, ScpB and the Smc homodimer, in which ScpA and ScpB bind to the head domain of Smc. The presence of the three proteins is required for the association of the complex with DNA.

It is found in the cytoplasm. In terms of biological role, participates in chromosomal partition during cell division. May act via the formation of a condensin-like complex containing Smc and ScpB that pull DNA away from mid-cell into both cell halves. In Staphylococcus aureus (strain NCTC 8325 / PS 47), this protein is Segregation and condensation protein A.